The sequence spans 1232 residues: MVHPVQVGKRTRMSFSRLKEVGQMPNLIEVQLDSYDWFLKEGLQEVFDDINPIQDYTGNLNLEFVGYKLDLDSIKYSVEECKERDSTYAAPLKVKVRLLNKETGEIKEQEVFMGDFPLMTEQGTFIINGAERVIVSQLVRSPGVYYDMTVDKTGSKLFSATVIPNRGAWLEYETDSNNIIYVRIDKTRKLPITILARALGYGTDAEIIEFFGEDERLKATIEKDNTKTREEALLEIYKRLRPGEPPTVDSAESLIESLFFDAKRYDLSRVGRYKFNKKLAIHLRITNQIADQDIVNPQTGEILVQKGEKIDKDKAIEIQSCGINEVYIKIDDKSFKVIGNHFVDIHSLVSFDISDLNIKEYVFYPVLKEILDNYADEESIKEEIRKNIYRLIPKHIIREDIYATINYELALSYDIGYKDDIDHLGNRRLRSVGELLQNQFRIGLSRMERVVKERMTIQDQEVITPQALINIRPVAASIKEFFGSSQLSQFMDQTNPLSELTHKRRLSALGPGGLSRERAGFEVRDVHHSHYGRMCPIETPEGPNIGLINSLATFAKVNEYGFIETPYRRIDPKNKRATNDIVYMTADEEDLYVIARSDEPIDENGYFIDDKVTVRAKEEVLVVPVSEVEYMDISPRQLVSVATAMIPFLENDDASRALMGSNMQRQAVPLLKPQAPIVGTGIEYKAATDSGVLPKAKNAGTVVYVSADEIRVRRDSDGGIDKYKLLKFKRSNQGTCINQRPIVSKGEVVAKETLLADGPSTDLGEIALGKNILMGFITWEGYNYEDAMLISEQLVKEDVFTSIHIEEYEAEARDTKLGPEEITRDIPNVGEEALKDIDERGIIRIGAEVRSGDILVGKVTPKGETELTAEERLLRAIFGEKAREVRDTSLRVPHGEAGIIVDVKIFTRENGDELPPGVNKLVRCYIAQKRKISVGDKMAGRHGNKGVISRVLPEEDMPFLPDGRPLQICLNPLGVPSRMNIGQVLEVHLGLAASKLGWHIATPVFDGAIESDIVDCLRKAGYSEDGKTVLYDGRTGEPFDNRVTVGYMYILKLAHLVDDKIHARSTGPYSLVTQQPLGGKAQFGGQRFGEMEVWALEAYGAAHTLQEILTVKSDDVVGRVKTYEAIVKGENIPEPGVPESFKVLIKELQALCLDVKVLNDDNQEIKLKESVDEDADELEVNIEGTENQPEEKEEKEKEDSDEYDDLREEDVEPDLEELSLDDLDLDDFGDEH.

The segment at 1170 to 1232 (SVDEDADELE…LDLDDFGDEH (63 aa)) is disordered. The segment covering 1171 to 1180 (VDEDADELEV) has biased composition (acidic residues). Residues 1189 to 1198 (PEEKEEKEKE) show a composition bias toward basic and acidic residues. Residues 1199–1232 (DSDEYDDLREEDVEPDLEELSLDDLDLDDFGDEH) show a composition bias toward acidic residues.

Belongs to the RNA polymerase beta chain family. As to quaternary structure, the RNAP catalytic core consists of 2 alpha, 1 beta, 1 beta' and 1 omega subunit. When a sigma factor is associated with the core the holoenzyme is formed, which can initiate transcription.

It catalyses the reaction RNA(n) + a ribonucleoside 5'-triphosphate = RNA(n+1) + diphosphate. In terms of biological role, DNA-dependent RNA polymerase catalyzes the transcription of DNA into RNA using the four ribonucleoside triphosphates as substrates. The chain is DNA-directed RNA polymerase subunit beta from Clostridium botulinum (strain Okra / Type B1).